A 1052-amino-acid polypeptide reads, in one-letter code: CCAAT/enhancer-binding protein zeta (1052 aa).

3 disordered regions span residues Met-1–Phe-40, Val-122–Ala-158, and Ser-621–Pro-677. The span at Glu-23–Asp-34 shows a compositional bias: acidic residues. The segment covering Val-122–Pro-150 has biased composition (basic and acidic residues). Acidic residues predominate over residues Pro-627–Asp-643. A phosphoserine mark is found at Ser-629 and Ser-641. Positions Glu-644–Pro-677 are enriched in basic and acidic residues. Ser-837 is modified (phosphoserine). Residues Lys-876–Phe-969 form a disordered region. Over residues Glu-883–Glu-932 the composition is skewed to acidic residues. Phosphoserine is present on residues Ser-958, Ser-972, and Ser-977. The segment at Lys-1032–Lys-1052 is disordered.

The protein belongs to the CBF/MAK21 family. Ubiquitous.

It is found in the nucleus. Stimulates transcription from the HSP70 promoter. The chain is CCAAT/enhancer-binding protein zeta (Cebpz) from Mus musculus (Mouse).